Here is a 284-residue protein sequence, read N- to C-terminus: Nucleotide-binding protein Sbal223_0704 (284 aa).

8–15 contributes to the ATP binding site; sequence GRSGSGKS. Residue 56–59 participates in GTP binding; it reads DVRN.

It belongs to the RapZ-like family.

Displays ATPase and GTPase activities. This Shewanella baltica (strain OS223) protein is Nucleotide-binding protein Sbal223_0704.